The sequence spans 807 residues: MSKQDSLWFKSLRWLQRKLVHTVVVPHDPFDDLNLDPSKPLVYVMKTESVSDIAALSEMTEKLGLPSPYEELEVNGIRAPRVVCLEGSKPLFGQREGGEQYIDYFKRLLSVHKQNLELDIQLVPVSLYWGRTPGKEDDTMRAAVLERQNPTWLRKCLMILFLGRHNFVQFSNAVSLRYMADEHGTDKRIAQKLARVARAHFERQRKVMTGPQLPKRQALFHALLKSDSITKAIKEEAASKKISESEARAKAMEYLDEVAADYSDSLVRIAERFLTWLWNKLYKGINIKGAEQVRQLHHDGHEIVYVPCHRSHMDYLLLSYILYYQGMVPPHIAAGINLNFWPAGPAFRRGGAFFIRRSFGGNKLYTAVFREYLDQLFTKGYSVEYFTEGGRSRTGRLLAPKTGMLAMTLNSVLRGVERPVTLVPVYLGYDHVMEVATYHKELSGKKKKKESVWQIFGAIRKLGNFGQGYVNFGEPITLHNFLNEQVPSWRDDIAKDPDQKPTWLTPVVNTLANQVMTNINDAAAVSSVTLTSMVLLASEQNALERSQLEKQLDLYLTLLKERPYTDYTSVPDGTGHDLVSQGLELKKLQIESDPLGDIISIDQSIAITMTYYRNNIIHLMVLPSLIAACLLRKENCGRNDVISIVNDFYPLLEAELFMGIEDPSQYANQILDILVAQGLVVECDHFEVVDSSINQLLLLSGTISETMQRYAILFNLLEVKPNMERSELEKDSHRLAQRLGALHGITAPEFYDKKLYATLSVKLKELGYLTDNQGCSDIKRIKERANLLLRSSVKQTIVDSVHAEHIA.

Residues 308–313 (CHRSHM) carry the HXXXXD motif motif.

It belongs to the GPAT/DAPAT family.

It is found in the cell inner membrane. It carries out the reaction sn-glycerol 3-phosphate + an acyl-CoA = a 1-acyl-sn-glycero-3-phosphate + CoA. The protein operates within phospholipid metabolism; CDP-diacylglycerol biosynthesis; CDP-diacylglycerol from sn-glycerol 3-phosphate: step 1/3. The protein is Glycerol-3-phosphate acyltransferase of Shewanella halifaxensis (strain HAW-EB4).